Consider the following 787-residue polypeptide: LPS-assembly protein LptD (787 aa).

The interval 1-78 (MAAGLPPLVV…AAGAAPAESG (78 aa)) is disordered. A compositionally biased stretch (low complexity) spans 59–78 (LPPVGTPAEPAAGAAPAESG).

It belongs to the LptD family. Component of the lipopolysaccharide transport and assembly complex. Interacts with LptE and LptA.

Its function is as follows. Together with LptE, is involved in the assembly of lipopolysaccharide (LPS) at the surface of the outer membrane. This Aromatoleum aromaticum (strain DSM 19018 / LMG 30748 / EbN1) (Azoarcus sp. (strain EbN1)) protein is LPS-assembly protein LptD.